The primary structure comprises 329 residues: Ubiquitin carboxyl-terminal hydrolase isozyme L5 (329 aa).

Residues 7–225 enclose the UCH catalytic domain; the sequence is EWCLMESDPG…IRFNLMAIVS (219 aa). Residue Lys47 is modified to N6-succinyllysine. Cys88 acts as the Nucleophile in catalysis. Lys158 carries the post-translational modification N6-acetyllysine. His164 acts as the Proton donor in catalysis. Lys289 bears the N6-succinyllysine mark. The 29-residue stretch at 291–319 folds into the ULD domain; it reads NYLPFIMELLKTLAEHQQLIPLVEKAKEK. The interval 313–329 is interaction with ADRM1; sequence VEKAKEKQNAKKAQETK.

It belongs to the peptidase C12 family. As to quaternary structure, component of the 19S (PA700) regulatory complex of the 26S proteasome. Interacts with ADRM1 and NFRKB. Component of the INO80 complex; specifically part of a complex module associated with N-terminus of INO80.

Its subcellular location is the cytoplasm. It is found in the nucleus. The enzyme catalyses Thiol-dependent hydrolysis of ester, thioester, amide, peptide and isopeptide bonds formed by the C-terminal Gly of ubiquitin (a 76-residue protein attached to proteins as an intracellular targeting signal).. Activated by ADRM1. Inhibited by interaction with NFRKB. Functionally, protease that specifically cleaves 'Lys-48'-linked polyubiquitin chains. Deubiquitinating enzyme associated with the 19S regulatory subunit of the 26S proteasome. Putative regulatory component of the INO80 complex; however is inactive in the INO80 complex and is activated by a transient interaction of the INO80 complex with the proteasome via ADRM1. This Sus scrofa (Pig) protein is Ubiquitin carboxyl-terminal hydrolase isozyme L5 (UCHL5).